A 363-amino-acid chain; its full sequence is NADH-quinone oxidoreductase subunit H (363 aa).

10 helical membrane-spanning segments follow: residues 29–49, 62–82, 94–114, 127–147, 166–186, 202–222, 239–257, 264–286, 293–313, and 339–359; these read VLKI…YVVW, GPMY…KLLF, VIFV…WAVV, VGLL…ILAG, VVSY…AAGS, FFDW…VSGV, IVAG…LFFL, ILVS…QGWV, LIDW…LFFA, and FIPL…SGVI.

Belongs to the complex I subunit 1 family. NDH-1 is composed of 14 different subunits. Subunits NuoA, H, J, K, L, M, N constitute the membrane sector of the complex.

Its subcellular location is the cell inner membrane. The catalysed reaction is a quinone + NADH + 5 H(+)(in) = a quinol + NAD(+) + 4 H(+)(out). Its function is as follows. NDH-1 shuttles electrons from NADH, via FMN and iron-sulfur (Fe-S) centers, to quinones in the respiratory chain. The immediate electron acceptor for the enzyme in this species is believed to be ubiquinone. Couples the redox reaction to proton translocation (for every two electrons transferred, four hydrogen ions are translocated across the cytoplasmic membrane), and thus conserves the redox energy in a proton gradient. This subunit may bind ubiquinone. The chain is NADH-quinone oxidoreductase subunit H from Xylella fastidiosa (strain M12).